The sequence spans 278 residues: Hydroxyethylthiazole kinase (278 aa).

Methionine 48 is a binding site for substrate. Arginine 124 and threonine 175 together coordinate ATP. Glycine 202 contributes to the substrate binding site.

Belongs to the Thz kinase family. Mg(2+) serves as cofactor.

The catalysed reaction is 5-(2-hydroxyethyl)-4-methylthiazole + ATP = 4-methyl-5-(2-phosphooxyethyl)-thiazole + ADP + H(+). It participates in cofactor biosynthesis; thiamine diphosphate biosynthesis; 4-methyl-5-(2-phosphoethyl)-thiazole from 5-(2-hydroxyethyl)-4-methylthiazole: step 1/1. Catalyzes the phosphorylation of the hydroxyl group of 4-methyl-5-beta-hydroxyethylthiazole (THZ). In Clostridium botulinum (strain Eklund 17B / Type B), this protein is Hydroxyethylthiazole kinase.